Reading from the N-terminus, the 68-residue chain is Conotoxin TsMMSK-021 (68 aa).

The N-terminal stretch at 1–20 (MMSKLGVLLTICLLLFPLTA) is a signal peptide. The propeptide occupies 21–52 (VRLDGDQHTDRPADRMQDIATEQHPLFDPVKR). 3 disulfides stabilise this stretch: Cys53/Cys66, Cys54/Cys62, and Cys58/Cys65. Pro64 is subject to 4-hydroxyproline.

The protein belongs to the conotoxin M superfamily. Expressed by the venom duct.

Its subcellular location is the secreted. This chain is Conotoxin TsMMSK-021, found in Conus tessulatus (Tessellate cone).